A 555-amino-acid polypeptide reads, in one-letter code: MIWVAVVITMLLFILVAKPTGIYLEKAFQGSKKLDKVFGPFEKLIFKITGVKEYNQTWKQYALSLVLLNGFMIVVVYFIFRLQGVLPLNPAHIEGMEPTLAFNTAISFMTDTNLQHYSGENGLSYLSQLIGITFLMFAAPATTLALVMAFIRGLAGKELGNFFVDFTRALTRVFLPIAFVTALVFVALGVPQTLDGAVTAQTIDGVKQSIVRGPVASFVSIKELGNNGGGFFGTNSTHPFENPGQMSNILQMMLMMLLPTALPFTYGRMVGNKKQGRILFVSLFMVFLLGFITITTSELNGNPALNAMGIEHVQGSTEGKEVRFGTVFSSLYATVTTAAETGAVNTMHDTLTPIGGLVPLVNMMLNTVYGGVGAGFVNIITYAIIAVFISGLMVGRTPEFLGKKIEGKEMKLIAVTILFHPLLILGFSALALSTSLGTDAISNLGFHGLTQIVYEYTSSAVNNGSGFEGLGDATTFWNITTGLVMFLGRYFSLVTMLAVAASLKEKTVVPETVGTFRTDNGLFGGIFIGTIVIVGALTFFPMLVLGPIAEFLTLK.

Transmembrane regions (helical) follow at residues 2–22, 60–80, 130–150, 173–193, 246–266, 278–298, 374–394, 412–432, 483–503, and 525–545; these read IWVAVVITMLLFILVAKPTGI, QYALSLVLLNGFMIVVVYFIF, IGITFLMFAAPATTLALVMAF, VFLPIAFVTALVFVALGVPQT, MSNILQMMLMMLLPTALPFTY, ILFVSLFMVFLLGFITITTSE, AGFVNIITYAIIAVFISGLMV, LIAVTILFHPLLILGFSALAL, LVMFLGRYFSLVTMLAVAASL, and GIFIGTIVIVGALTFFPMLVL.

The protein belongs to the KdpA family. As to quaternary structure, the system is composed of three essential subunits: KdpA, KdpB and KdpC.

The protein resides in the cell membrane. Part of the high-affinity ATP-driven potassium transport (or Kdp) system, which catalyzes the hydrolysis of ATP coupled with the electrogenic transport of potassium into the cytoplasm. This subunit binds the extracellular potassium ions and delivers the ions to the membrane domain of KdpB through an intramembrane tunnel. The chain is Potassium-transporting ATPase potassium-binding subunit from Bacillus thuringiensis subsp. konkukian (strain 97-27).